Consider the following 188-residue polypeptide: Preprocaerulein type-1 (188 aa).

The first 26 residues, M1–A26, serve as a signal peptide directing secretion. Residues D27 to G170 constitute a propeptide that is removed on maturation. The interval L152–D188 is disordered. Y174 is modified (sulfotyrosine). Residue F180 is modified to Phenylalanine amide. Residues N184 to D188 constitute a propeptide that is removed on maturation.

Belongs to the gastrin/cholecystokinin family. As to expression, expressed by the skin glands.

Its subcellular location is the secreted. The pharmacological activities of caerulein are quite similar to the physiological activities of gastrin and related peptides. The polypeptide is Preprocaerulein type-1 (Xenopus laevis (African clawed frog)).